We begin with the raw amino-acid sequence, 293 residues long: Ribosomal protein L11 methyltransferase (293 aa).

S-adenosyl-L-methionine-binding residues include T145, G166, D188, and N230.

Belongs to the methyltransferase superfamily. PrmA family.

The protein localises to the cytoplasm. The enzyme catalyses L-lysyl-[protein] + 3 S-adenosyl-L-methionine = N(6),N(6),N(6)-trimethyl-L-lysyl-[protein] + 3 S-adenosyl-L-homocysteine + 3 H(+). In terms of biological role, methylates ribosomal protein L11. The polypeptide is Ribosomal protein L11 methyltransferase (Shewanella piezotolerans (strain WP3 / JCM 13877)).